The primary structure comprises 502 residues: ATP synthase subunit alpha, chloroplastic (502 aa).

170–177 contacts ATP; the sequence is GDRQTGKT.

It belongs to the ATPase alpha/beta chains family. As to quaternary structure, F-type ATPases have 2 components, CF(1) - the catalytic core - and CF(0) - the membrane proton channel. CF(1) has five subunits: alpha(3), beta(3), gamma(1), delta(1), epsilon(1). CF(0) has four main subunits: a, b, b' and c.

The protein localises to the plastid. Its subcellular location is the chloroplast thylakoid membrane. The catalysed reaction is ATP + H2O + 4 H(+)(in) = ADP + phosphate + 5 H(+)(out). Its function is as follows. Produces ATP from ADP in the presence of a proton gradient across the membrane. The alpha chain is a regulatory subunit. This Rhodomonas salina (Cryptomonas salina) protein is ATP synthase subunit alpha, chloroplastic.